The chain runs to 506 residues: 2-isopropylmalate synthase (506 aa).

One can recognise a Pyruvate carboxyltransferase domain in the interval 6-267; the sequence is IIVFDTTLRD…YTDIVTKEIY (262 aa). Residues aspartate 15, histidine 201, histidine 203, and asparagine 237 each contribute to the Mn(2+) site. Residues 391-506 form a regulatory domain region; it reads SIQTLSTSSC…LNSYLSMKNR (116 aa).

It belongs to the alpha-IPM synthase/homocitrate synthase family. LeuA type 1 subfamily. As to quaternary structure, homodimer. Mn(2+) is required as a cofactor.

It is found in the cytoplasm. It carries out the reaction 3-methyl-2-oxobutanoate + acetyl-CoA + H2O = (2S)-2-isopropylmalate + CoA + H(+). Its pathway is amino-acid biosynthesis; L-leucine biosynthesis; L-leucine from 3-methyl-2-oxobutanoate: step 1/4. Functionally, catalyzes the condensation of the acetyl group of acetyl-CoA with 3-methyl-2-oxobutanoate (2-ketoisovalerate) to form 3-carboxy-3-hydroxy-4-methylpentanoate (2-isopropylmalate). The sequence is that of 2-isopropylmalate synthase from Campylobacter fetus subsp. fetus (strain 82-40).